Here is a 582-residue protein sequence, read N- to C-terminus: MQYSHHCEHLLERLNKQREAGFLCDCTIVIGEFQFKAHRNVLASFSEYFGAIYRSTSENNVFLDQSQVKADGFQKLLEFIYTGTLNLDSWNVKEIHQAADYLKVEEVVTKCKIKMEDFAFIANPSSTEISSITGNIELNQQTCLLTLRDYNNREKSEVSTDLIQANPKQGALAKKSSQTKKKKKAFNSPKTGQNKTVQYPSDILENASVDLFLDANKLPTPVVEQVAQINDNSELELTSVVENTFPAQDIVHTVTVKRKRGKSQPNCALKEHSMSNIASIKSPYEAENSGEELDQRYSKAKPMCNTRGKVFSEASSLRRHMRIHKGVKPYVCHLCGKAFTQCNQLKTHVRTHTGEKPYKCELCDKGFAQKCQLVFHSRMHHGEEKPYKCDVCNLQFATSSNLKIHARKHSGEKPYVCDRCGQRFAQASTLTYHVRRHTGEKPYVCDTCGKAFAVSSSLITHSRKHTGERPFICELCGNSYTDIKNLKKHKTKVHSGADKTPDSSAEDHTLSEQDSIQKSPLSETMDVKPSDTTLPLALPLGTEDHHMLLPVTDTQSPTSDTLLRSTVNGYSEPQLIFLQQLY.

One can recognise a BTB domain in the interval 24–89 (CDCTIVIGEF…IYTGTLNLDS (66 aa)). The interval 169 to 197 (QGALAKKSSQTKKKKKAFNSPKTGQNKTV) is disordered. 2 short sequence motifs (nuclear localization signal) span residues 174 to 190 (KKSSQTKKKKKAFNSPK) and 257 to 262 (KRKRGK). Residues 188–197 (SPKTGQNKTV) are compositionally biased toward polar residues. At Ser289 the chain carries Phosphoserine. The C2H2-type 1; degenerate zinc finger occupies 302–324 (PMCNTRGKVFSEASSLRRHMRIH). 6 C2H2-type zinc fingers span residues 330-352 (YVCHLCGKAFTQCNQLKTHVRTH), 358-381 (YKCELCDKGFAQKCQLVFHSRMHH), 387-409 (YKCDVCNLQFATSSNLKIHARKH), 415-437 (YVCDRCGQRFAQASTLTYHVRRH), 443-465 (YVCDTCGKAFAVSSSLITHSRKH), and 471-494 (FICELCGNSYTDIKNLKKHKTKVH). The segment at 489–538 (HKTKVHSGADKTPDSSAEDHTLSEQDSIQKSPLSETMDVKPSDTTLPLAL) is disordered. The segment covering 495–511 (SGADKTPDSSAEDHTLS) has biased composition (basic and acidic residues). The span at 512–522 (EQDSIQKSPLS) shows a compositional bias: polar residues.

This sequence belongs to the krueppel C2H2-type zinc-finger protein family.

It is found in the nucleus. The protein is Myoneurin (MYNN) of Pongo abelii (Sumatran orangutan).